We begin with the raw amino-acid sequence, 253 residues long: tRNA (guanine-N(1)-)-methyltransferase (253 aa).

S-adenosyl-L-methionine is bound by residues Gly113 and Ile133–Leu138.

This sequence belongs to the RNA methyltransferase TrmD family. As to quaternary structure, homodimer.

The protein resides in the cytoplasm. It catalyses the reaction guanosine(37) in tRNA + S-adenosyl-L-methionine = N(1)-methylguanosine(37) in tRNA + S-adenosyl-L-homocysteine + H(+). Its function is as follows. Specifically methylates guanosine-37 in various tRNAs. This is tRNA (guanine-N(1)-)-methyltransferase from Chloroflexus aurantiacus (strain ATCC 29366 / DSM 635 / J-10-fl).